The primary structure comprises 340 residues: GPALPP motifs-containing protein 1 (340 aa).

The tract at residues 1 to 304 (MARDLIGPAL…PQERIPFDRD (304 aa)) is disordered. Ala2 bears the N-acetylalanine mark. Positions 7–12 (GPALPP) match the GPALPP motif 1 motif. The residue at position 28 (Ser28) is a Phosphoserine. A GPALPP motif 2 motif is present at residues 32-37 (GPALPP). A compositionally biased stretch (acidic residues) spans 60 to 69 (GNQESEEDDS). The short motif at 92–97 (GPALPP) is the GPALPP motif 3 element. Ser105 bears the Phosphoserine mark. Positions 107–116 (PRPIIGPALP) are enriched in pro residues. The GPALPP motif 4 motif lies at 112 to 117 (GPALPP). The segment covering 124–133 (QKSDKGRDDP) has biased composition (basic and acidic residues). Thr138 is subject to Phosphothreonine. A phosphoserine mark is found at Ser140 and Ser141. Composition is skewed to basic and acidic residues over residues 163–187 (EFEK…KPIV), 227–261 (PADR…KRLA), 269–279 (ESKRSESLMDI), and 287–304 (KAAE…FDRD). Lys271 is covalently cross-linked (Glycyl lysine isopeptide (Lys-Gly) (interchain with G-Cter in SUMO2)). Lys308 participates in a covalent cross-link: Glycyl lysine isopeptide (Lys-Gly) (interchain with G-Cter in SUMO2).

In Homo sapiens (Human), this protein is GPALPP motifs-containing protein 1 (GPALPP1).